The chain runs to 5112 residues: MSRFSCIFPTLTDGYVPNPDHTRAAGRRTYTIDLSGWNGSSGQAESYILAAWGLVLSSYVGTDEVAFYVVPTTGPDTTALAELKVEGDMSRLSLTDAAEQLLHPKHVGAGQISGETANTIITFANDIESLFVTQTEESFLLLHVHRDEKGHISLTLTYYLSLLTDAQAANVCTAMSQALAVVTTDHPERLIKDLNLMSPTHIDHIWKFNANVPGPWEECFHDVVERHAANRPHSLAVDAWDMKLTYAELVREAHLLAAYLQQRGVRPGSVVPISFERSGAALVAMLAVSKAGGAFVSVPPNLPAGRLDAILEVIEAPFVVTWSKYEAFWSERLSTLPIDNYPKPSGDATVESLGKPDDLFYVIFTSGSTGRPKGCMLSHSNWLNGALRNAPSWKYGPESRVLQMLSHTFDMSLLEICTSLGSGACVCVPCTEEIETSVSDAINRWQVNHVIMTPSLARALKPDDVPGLKTMCLGGEAFPKEIVTMWSERINLWQFYGPSECSINSSSRPITRPDADPLNIGPPNSAACWVVDAQDYNKLVPVGAIGELLVSGPIVGMGYLKNPVKTAEAFLDQVGFVSKDDPQFGGFRFYRTGDHVRWNSDGTITFCGRADTQVKLNGQRLELAEVEYQLGLEDGVQYAIAMSPQTGRCKNNLIAILTVKGTNCSNQRNAADEIPLLDRRDPIIQQTVKKLRSQLQHALPRYMVPTIWAFVGRMPMSASGKIDRVQLRNWVQEMSQETFDAITGRSFEAEDHVLGLSRLEQEIQLAWAEALGLSAAEVGLQQPFVALGGDSIKALDAVARCRTRQIKISMVHILSCEGVREAASLAEVQETPAQQVAEMAVDYSDLWTRLSTEYDLGKLGVTQVEDVEDVFPCTTMQEGMFLGQIRRPGAYHMRFFHRVQLKGGCLPTVDRIQQAWASLIERHPSLRTIFVDDLSPDAIYHSVVLRSVPLELTMREVPRDLSPEDALAMFTDELVPFRPNAPLHRMLLLTCRGRVPYFMLEISHVIMDGYALSVFRREFIQACSSTGPLPRGPDYRMFANYHRTRQTDDSAKYWTNYLSDCVPCHIPTHAVIAPTDAPPEWPRNLQRRDFSFNNSAAFLQRCKERQVTLACAIRAAWALVLRAYTQSQDVCFGYVSSGRNVPVPEVETIFGLCLSMQVCRARLSESSTIASLARKIQEDYVASLPFQHYPLAEAQRGLKQTHGQGLFNTAISMEWVPPTAEDGDALLDLEEIREQDDPTEYDVAISVDIHEGHIKLGFLYWPNLTEFEIAHLAEALQGAMNCFAYQPDDALDSLTLLQASDVCSTLADGPTLLPLEAVRVNMLSMIDRRVTRQPDTPAIEGWDGSLSYKQLHEQSCWVARNLLHQGLQLGDRVLVCADRSSRTVATILGLVRAGCVLVLSNPTDPDKRLHWLAEKCNAALIIADPAYEKRFATAGSRVLLTTAVCSPAAWDYEFPALDEHDLISILFTSGSTGTPKGILMDHGALATSVLLGHGRTLRFSRQTRMLHFASLTFDAALAEIFTTLAHGGCICVPTEEDRLSDVPGCISRFAVNTAMLTPSVGRLLDPTALPMLKSLIMVGEPMSRLDVERFAPVLDLYNGAGPTETSIMVTIAGPMTPTDEPTNLGHSVAGVRLWVTEAEDPNRLAPLGAVGELIVEGRLVTRGYLDDGERTQQAFLPSLPWLPSQHALYRTGDLVRYADDGSLRYMGRKDTQVKLRGQRIELQEVEYHLRKSLQQAQVVVEMVIPEGKTRAQASLVAFVSGLTAADVESSSACNSEESMTISQVVLPKSTIQTLEEALPRHMIPSVYYALETIPLSVNGKADRRRLREMGASLLASSAANKSTADGKKEPAKWTAASELERTLLELWATTLGLEVEAIHGDDSFFELGGDSVSAMKLVATARDKFKLSLSVPQMFRYPTIRQLAAELGESPRSSTSSASSSTEDEFTISTPDDSSTNDGVDDDFLQLATAQLAQLAQEKGKKVDIAALLKQLQGGSSSSKTPSVSSSSSSSSSRKKKSSKAAFPVEAPGPVPEPFSLLNGDADVVEQVRAHAAEQCKIPHEDIEDIYPATALQEGMMALMARTPGVYTTALTCELSSQIDLARLHSAWDKAAEAHPILRTRIIMTDDNTAVQVVQRAKGLPWDRYTLQDGESIPNLTSDMTLGSPLLRLAEIHRHSKPPMLLVAIHHALYDGWSMPLLKQAVEDAYHGQTLQPQPFTPFINYLKEGKRAAQDFWTAHLDGFAGGVFPNLPSIDHHIQPSERRSRSLTIPTAVSRNQYTMATKIQAAWAVTVSRYAEDEDIVFGTVSTGRSAPVPAIDRMVGPTITTVPVRISLGDQAQRVSPLLQRVQEDGWNRMDHEHLGLQYIGRLSESAAAACRLQTLLVIQPREESHANSGATLLSGLQDSAELEGVDTYPLMLVCEPDGASLHLTAVFDPLVLDRTILERMLAHWELVLTQLWTEPDMAVVDLDAVSYSDKQTLVQWNVGEKIADGCAHDAVHEWSIRTPHAPAVCAWDGEWTYEELDKCSSLLASQILEHGVTSGDFVALYHEKSRWVAAGILAVFKAGGILVTLDPAHPKDRIRDILDQTQPRLILTSQSLLGEARELDTPVLCLQFAASQPVPERCSSPPTVSPTQAAYAPFTSGSTGRPKGVPLEHRGLAASTASVSRACLLRPASRVLHFASFAFDASIMEPLVAWHAGGCLCIPDETARQTDLARCIRDFDVTWAFLTPSCLRLITPDDVQCLEALALGGESMTPEDISIWCPRLNQMVQLYGPAECCFVAALTEVTKPSENRLIGRPNACRCWVVNPKSPERLAPLGAIGELMVEGITVGQGYINNPERTTQSFIQPPTWLQALYPDEEQPRHLYRTGDLVRYAGEDGKLTFIGRRDGQVKLHGQRIELADVEAHLRPLIPAKHNIVVEMISSVDNQHPLLAAFVEEPSPSQGPQEQHIGLIHPSEAQYALNVKTIDGALSRTVPQHMIPSMYLHISRLPLSSSGKLNRRQLREMVAQLPRQKLNEYAAGSCEMASQRPTTAKECEMQAIWARVLAADPDTIGLNDDFFRIGGDSISGMQIATKCNAAGMHITSADLFRHRTIAQLLFHLRNAKKRGDAISLPAEPVEEWVDLAPIQQLFFEIAPEGSSHFNQSLLLRTSRHISVEELTAGLDILVKRHSMLRASFRRSESGHWSQQVRSLDSPAGTFYRLATHNGITRESLPSVFTTSQTSLSIQEGPLLAIDLVELTDGSQLLYLVAHHLVIDLVSWRILHGELEQYLQTGSLEPVTESVPFLTWSRAQAEYSAKHLTPVSALPRFQEAHDEFDGARYWGIPPESNTFGQTSTFRFTLDQTATDTLFGTGNNVLGTRPVEILQAALWYSFTQSLTDRPYPSIYVEGHGREPWADSIDISGTVGWFTTMSPLVFAPWDSLSRTSMEDFLDALSYIKDQRRRVPANGWAYFTSRYLNDEGKVAYGRMKPVVEILFNYMGQYQEMTREDAILQLAGDDIQSGTGAADIADDVPRFSLIDVGAFTANGCLSFEFIFPECIQRDARLKLWVENCERMLLSAAKLLSNEGPRKTLSDFPLMPELTYEQLSQCFEHTLPSMGLSASDVVNIYPCSSVQQGMLLAQLRDPQAYQQRFKFHVKSDERRLTLEQVKDAWREVINRHDILRTLLLPVSDHGHLDQVVMAPGSLQHLVRIDATDVNLTQGIPHSINITRDSSGTVVCEWNVSHVLVDAMSVAVIQLEVSQSLDGLLGQHEKPGQYADYIQWVSRRDKTETQAYWQRYLEGVEPCLFPKLTSTSDNVKPEGTISAVRATWDRDARMDELCQKHGITLTNLFHIVWALVLGAYVGTDDVCFGYTTLGRDVPVDGVEMMVGPLVNVLATTVQLRDEDSILDALRTHQAHLTNSLQHQHHALADVYASIGLVGSQLFNTIVSLQDVSHFDAPDEQSTRLEVQPANDASEVCHYLLVYKCFIFFDVNFRKYDVALNIGVGSSSIQLVCSYRTLSLSAEHADTLLRTASHVLSEILRDPTQRIQEIEIISPECKEQLVKWNPTVPAPSDEYIHEKIQGQCRLHSSRQAVCAWDGIFTYAELDDLSSRLAVRLTRMGATSEHIIPIYSPRSRWTVIAILGVLKTGAAFTLLEVSHPMNRLQEVCKQIDASVIIAPASHATSAASLAPILVVLDNITSMTPGQSESSPAVRMPPASEALAYLIFTSGSTGNPKGVMVTHQNLCSNASIMTTSVNMTADSRVLQFASYAFDASLWEMLGALFAGACLVIPSESESKEDLAGCIDRMAVTWAFLTPSVARILKPERVPQLRVLALGGEPIAVSDLDTWRTHAQVVCAYGPSETAILASTTSPSTIPTVGKDIGMPTTCSLWIVDKRDYQKLAPLGATGELLIEGPNVSKGYLGDPEKTNEAFPVAPRWLSQLRQSPTRVYRTGDLVRFDQSTGTLRFVGRKDNQIKFHGQRIELGDIENHAQQALPNASTVIVDLISPGESQQSYLVAFVYQPDTSTQTADAIDPILLPPSESFRTDALAAQKHMHDRLPHYMVPTAFLPLNCLPLSNTGKADRKRLRHCALALSGSELNAYRATATAKRMPSTEAECIMQQLIATVLGRDASEIGMDDSFFHLGGDSVQAMRLVSEGRQQGLTLSLRTIFDSPRLDDLARHNSLVQDDQPAAASPATMHDTFSLIDKLVSTYPIDKAAVVDILPTTSFQRHWLDAQLKSYIVVDIPGRISRDRLFTAMQRVVDAHPILRTSFVPHDNTAVQVILRTAFAITDADLSTTTVEDLCRQDANAAIAPGAPYLRVILATGEFGYKLIMRLSHAQYDAVSLSLLMNDLGHAYENDTHELPSSYSPSFTDYITYQQRQKVDSTATTFWRHLLQDVPLTSLDLQPSKPSTSNGTPITRTRDINIATFPQLPNGITLATAVKAAWSIVLAQKTNSPAVIFGQVVHGRGIPLPGVEGIVGPCANITPVVARLSPQTTGLELLQALQDQHRSGLSYEAVDLDDALAYTKGWQAGSPRVQTIVQHQNNVMTDGMGLSLGEVKCGVDVRAVDHVPREVWVYSSVDENKPGMLEVKIMSSTLVLSEEVAEELMDLVVEKVVALLRDPRGVCV.

Residues 225–616 (ERHAANRPHS…CGRADTQVKL (392 aa)) form an adenylation 1 region. Residues 757–830 (SRLEQEIQLA…EAASLAEVQE (74 aa)) form the Carrier 1 domain. The residue at position 791 (Ser-791) is an O-(pantetheine 4'-phosphoryl)serine. Residues 868–1299 (EDVFPCTTMQ…ALDSLTLLQA (432 aa)) are condensation 1. An adenylation 2 region spans residues 1327-1716 (DRRVTRQPDT…GRKDTQVKLR (390 aa)). Residues 1854–1931 (TAASELERTL…QLAAELGESP (78 aa)) enclose the Carrier 2 domain. An O-(pantetheine 4'-phosphoryl)serine modification is found at Ser-1891. 2 disordered regions span residues 1926–1961 (ELGE…DGVD) and 1994–2034 (GGSS…VPEP). Composition is skewed to low complexity over residues 1930-1941 (SPRSSTSSASSS) and 1994-2012 (GGSS…SSSS). A condensation 2 region spans residues 2064–2479 (EDIYPATALQ…AVSYSDKQTL (416 aa)). The interval 2502–2894 (IRTPHAPAVC…IGRRDGQVKL (393 aa)) is adenylation 3. A Carrier 3 domain is found at 3030–3106 (RPTTAKECEM…QLLFHLRNAK (77 aa)). Residue Ser-3067 is modified to O-(pantetheine 4'-phosphoryl)serine. Condensation stretches follow at residues 3122–3586 (WVDL…TYEQ) and 3607–4044 (NIYP…EQLV). The adenylation 4 stretch occupies residues 4069–4459 (HSSRQAVCAW…VGRKDNQIKF (391 aa)). One can recognise a Carrier 4 domain in the interval 4593 to 4669 (MPSTEAECIM…DLARHNSLVQ (77 aa)). Ser-4630 is subject to O-(pantetheine 4'-phosphoryl)serine. The condensation 5 stretch occupies residues 4724 to 5106 (IVVDIPGRIS…VEKVVALLRD (383 aa)).

Belongs to the NRP synthetase family.

It functions in the pathway secondary metabolite biosynthesis. Its function is as follows. Nonribosomal peptide synthetase; part of the gene cluster that mediates the biosynthesis of malformins, cyclic pentapeptides with a disulfide bond between 2 consecutive cysteins, that show potential anti-tumor as well as antimalarial and antitrypanosomal properties. The nonribosomal peptide synthetase mlfA is responsible of the formation of the cyclic pentapeptide. MlfA probably acts iteratively on one amino acid and possesses multiple amino acid specificities since it is involved in the biosynthesis of multiple malformins, including malformin C and malformin A2. Malformin C corresponds to a cyclo[D-Cys-D-Cys-Val-D-Leu-Val] pentapeptide whereas malformin A2 corresponds to a cyclo[D-Cys-D-Cys-Val-D-Leu-Ile] pentapeptide. The malformin biosynthesis clusters in malformin-producing fungi also contain enzymes involved in the formation of the disulfide bond between the two consecutive cysteins within malformins, in addition to additional tailoring enzymes such as methyltransferases or oxidoreductases. They are also composed of up to 4 major facilitator superfamily transporters, and transcription factors probably involved in the regulation of the expression of those clusters. The protein is Malformin synthetase mlfA of Aspergillus brasiliensis (strain CBS 101740 / IMI 381727 / IBT 21946).